We begin with the raw amino-acid sequence, 298 residues long: MRRYHKMEKIGEGTYGVVYKAQNNHGEICALKKIRVEEEDEGIPSTAIREISLLKELHHPNIVWLRDVIHSEKCLTLVFEYLDQDLKKLLDACDGGLEPTTAKSFLYQILRGISYCHDHRILHRDLKPQNLLINREGVLKLADFGLARAFAIPVRSYTHEVVTLWYRAPDVLMGSKKYSTAVDIWSVGCIFAEMINGVPLFPGISEQDQLKRIFKILGTPSVDSWPQVVNLPAYNPDFSYYEKQSWSSIVPKLNESGIDLISRMLQLDPVQRISAKEALKHDYFKDLHRPPEFLNGVH.

Residues 4–284 (YHKMEKIGEG…AKEALKHDYF (281 aa)) form the Protein kinase domain. ATP is bound by residues 10–18 (IGEGTYGVV) and Lys-32. Thr-14 carries the phosphothreonine modification. Tyr-15 bears the Phosphotyrosine mark. Asp-125 serves as the catalytic Proton acceptor. Thr-158 carries the post-translational modification Phosphothreonine.

Belongs to the protein kinase superfamily. CMGC Ser/Thr protein kinase family. CDC2/CDKX subfamily. In terms of assembly, may form a complex composed of at least the catalytic subunit CRK2 and a cyclin. It depends on Mg(2+) as a cofactor.

The protein localises to the cytoplasm. It carries out the reaction L-seryl-[protein] + ATP = O-phospho-L-seryl-[protein] + ADP + H(+). It catalyses the reaction L-threonyl-[protein] + ATP = O-phospho-L-threonyl-[protein] + ADP + H(+). The catalysed reaction is [DNA-directed RNA polymerase] + ATP = phospho-[DNA-directed RNA polymerase] + ADP + H(+). Its activity is regulated as follows. Phosphorylation at Thr-14 or Tyr-15 inactivates the enzyme, while phosphorylation at Thr-158 activates it. Its function is as follows. Serine/threonine-protein kinase. Involved in the control of the cell cycle. Required for entry into S-phase and mitosis. Probable component of the kinase complex that phosphorylates the repetitive C-terminus of RNA polymerase II. The sequence is that of Cyclin-dependent kinase 2 homolog from Theileria parva (East coast fever infection agent).